Consider the following 348-residue polypeptide: Aminotransferase atnJ (348 aa).

Arginine 79 is a pyridoxal 5'-phosphate binding site. Lysine 180 bears the N6-(pyridoxal phosphate)lysine mark. A pyridoxal 5'-phosphate-binding site is contributed by glutamate 216.

The protein belongs to the class-IV pyridoxal-phosphate-dependent aminotransferase family. Requires pyridoxal 5'-phosphate as cofactor.

It functions in the pathway secondary metabolite biosynthesis. Functionally, aminotransferase; part of the gene cluster that mediates the biosynthesis of aspercryptins, linear lipopeptides built from six amino acids including 2 highly unusual and nonproteogenic amino acids, 2-amino-octanoic acid (2aoa) and 2-amino-dodecanol (2adol). The core structure of aspercryptins is as follows: Ser/Ala-Thr-Ile/Val-2aoa-Asn-2adol. The first step of aspercryptin biosynthesis is the generation of the fatty acid precursors, octanoic and dodecanoic acids, by the FAS subunits atnF and atnM. The fatty acid precursors are likely transformed into the corresponding alpha-amino fatty acids in three steps. First, they are hydroxylated by the cytochrome P450 monooxygenase atnE, then oxidized to the corresponding alpha-keto acids by the NAD(P)-dependent oxidoreductase atnD, and finally converted to the alpha-amino fatty acids by the PLP-dependent aminotransferases atnH or atnJ. the alpha-amino fatty acids, 2-amino-octanoic and 2-amino-dodecanoic acids, are recognized, activated, and covalently tethered to the NRPS atnA by its fourth and sixth adenylation domains. The second module of atnA is the Thr module and contains an epimerase (E) domain responsible for the epimerization of Thr to D-allo-Thr. Additionally, despite atnA having only one epimerase domain, the first amino acid of aspercryptin A1 is D-Ser, suggesting that serine is either loaded directly as D-Ser on the first module or that the epimerase domain in the threonine module epimerizes both L-Ser and L-Thr. After condensation of the hexapeptide of aspercryptin, the C-terminal reductase (TE) domain might be involved in the reductive release and production of the aldehyde hexapeptide. Further reduction would generate aspercryptins. The variety of aspercryptins produced reflects the flexibility of the atnA NRPS, allowing incorporation of alanine instead of serine, valine for isoleucine, and a C10 fatty amino alcohol instead of the C12 version. AtnB seems to be involved in the selectivity for Ile versus Val by the third module. Moreover, type B, C and D aspercryptins have an additional N-terminal cichorine, acetyl and propionyl group respectively. In Emericella nidulans (strain FGSC A4 / ATCC 38163 / CBS 112.46 / NRRL 194 / M139) (Aspergillus nidulans), this protein is Aminotransferase atnJ.